The sequence spans 163 residues: MALVRIGKVVRALGLKGHLGVAGSEGALGTLERVVLRHGAAEVERKVLEARPQGRLWAVRIDGVADRTGAEALVGAEVLAPREELGEAGEGRHYWGDLEGLPVVTVQGEALGTVTGLMETGAVDVLVVQGARGELLVPLAPYVEVDRAAGRVVVDPPEGLLEP.

Positions 90-161 (EGRHYWGDLE…VVVDPPEGLL (72 aa)) constitute a PRC barrel domain.

This sequence belongs to the RimM family. In terms of assembly, binds ribosomal protein uS19.

The protein localises to the cytoplasm. Functionally, an accessory protein needed during the final step in the assembly of 30S ribosomal subunit, possibly for assembly of the head region. Essential for efficient processing of 16S rRNA. May be needed both before and after RbfA during the maturation of 16S rRNA. It has affinity for free ribosomal 30S subunits but not for 70S ribosomes. The protein is Ribosome maturation factor RimM of Anaeromyxobacter dehalogenans (strain 2CP-C).